We begin with the raw amino-acid sequence, 506 residues long: Gallate 1-beta-glucosyltransferase 84A23 (506 aa).

The Proton acceptor role is filled by His-20. His-20 serves as a coordination point for an anthocyanidin. Positions 345, 360, 363, 364, 365, and 368 each coordinate UDP-alpha-D-glucose. Position 383 (Gly-383) interacts with an anthocyanidin. Positions 384 and 385 each coordinate UDP-alpha-D-glucose.

Belongs to the UDP-glycosyltransferase family. Expressed in roots of the seedlings.

It localises to the cytoplasm. It catalyses the reaction 3,4,5-trihydroxybenzoate + UDP-alpha-D-glucose = 1-O-galloyl-beta-D-glucose + UDP. The enzyme catalyses 3,4-dihydroxybenzoate + UDP-alpha-D-glucose = 1-O-(3,4-dihydroxy-benzoyl)-beta-D-glucose + UDP. The catalysed reaction is 4-hydroxybenzoate + UDP-alpha-D-glucose = 4-(beta-D-glucosyloxy)benzoate + UDP + H(+). It carries out the reaction (E)-cinnamate + UDP-alpha-D-glucose = 1-O-(trans-cinnamoyl)-beta-D-glucose + UDP. It catalyses the reaction (E)-sinapate + UDP-alpha-D-glucose = 1-O-(trans-sinapoyl)-beta-D-glucose + UDP. The enzyme catalyses (E)-4-coumarate + UDP-alpha-D-glucose = 1-O-(trans-4-coumaroyl)-beta-D-glucose + UDP. The catalysed reaction is (E)-caffeate + UDP-alpha-D-glucose = 1-O-[(E)-caffeoyl]-beta-D-glucose + UDP. It carries out the reaction (E)-ferulate + UDP-alpha-D-glucose = 1-O-[(E)-feruloyl]-beta-D-glucose + UDP. It catalyses the reaction genistein + UDP-alpha-D-glucose = genistein 7-O-beta-D-glucoside + UDP + H(+). The enzyme catalyses apigenin + UDP-alpha-D-glucose = apigenin 7-O-beta-D-glucoside + UDP + H(+). The catalysed reaction is luteolin + UDP-alpha-D-glucose = luteolin 7-O-beta-D-glucoside + UDP + H(+). In terms of biological role, glucosyltransferase that catalyzes the formation of 1-O-beta-D-glucose esters with hydroxybenzoic acids and cinnamic acid including its derivatives as preferred glucosyl acceptors. Has significant activity with gallic acid (3,4,5-trihydroxybenzoic acid), 3,4-dihydroxybenzoic acid, 4-hydroxybenzoic acid, cinnamic acid, sinapic acid, coumaric acid, caffeic acid and ferulic acid in vitro. Gallic acid is the predicted native substrate of the enzyme, which thus catalyzes the formation of 1-O-galloyl-beta-D-glucose, the first committed step of hydrolyzable tannins (HTs) biosynthesis, with punicalagin isomers being the major HTs of pomegranate. Catalyzes the formation of flavonoid glucosides with genistein, apigenin and luteolin in vitro. Has low activity with benzoic acid, 2-hydroxybenzoic acid, 3-hydroxybenzoic acid, 2,4-dihydroxybenzoic acid, naringenin and quercetin. No activity with catechol, resveratrol, chlorogenic acid, catechin and epicatechin (building blocks of proanthocyanidins) or cyanidin, delphinidin and pelargonidin (the three anthocyanidins). The sequence is that of Gallate 1-beta-glucosyltransferase 84A23 from Punica granatum (Pomegranate).